Reading from the N-terminus, the 699-residue chain is Putative inactive kinesin-like protein KIN-7B (699 aa).

The Kinesin motor domain maps to 1–170; it reads MRAIQKKSLC…LLFGSCAKEV (170 aa). The stretch at 179-247 forms a coiled coil; sequence VMSDKALVKH…QSRLQDLLQS (69 aa). A disordered region spans residues 249 to 345; that stretch reads GDHDLNRQVQ…VNSRHSRPSG (97 aa). Residues 264-275 are compositionally biased toward low complexity; it reads RSPPSVGMPPSV. Residues 276-298 are compositionally biased toward basic and acidic residues; it reads SRDDSSQVSHDDSDLYKEVRCIE. The span at 313–338 shows a compositional bias: polar residues; the sequence is GESSSPQDSNMNSGLHGNDSNASVNS.

Belongs to the TRAFAC class myosin-kinesin ATPase superfamily. Kinesin family. KIN-7 subfamily.

This Oryza sativa subsp. japonica (Rice) protein is Putative inactive kinesin-like protein KIN-7B.